The following is a 279-amino-acid chain: 3-methyl-2-oxobutanoate hydroxymethyltransferase (279 aa).

D43 and D82 together coordinate Mg(2+). 3-methyl-2-oxobutanoate contacts are provided by residues 43–44 (DS), D82, and K112. E114 is a binding site for Mg(2+). E181 acts as the Proton acceptor in catalysis.

It belongs to the PanB family. As to quaternary structure, homodecamer; pentamer of dimers. Requires Mg(2+) as cofactor.

It localises to the cytoplasm. It carries out the reaction 3-methyl-2-oxobutanoate + (6R)-5,10-methylene-5,6,7,8-tetrahydrofolate + H2O = 2-dehydropantoate + (6S)-5,6,7,8-tetrahydrofolate. It functions in the pathway cofactor biosynthesis; (R)-pantothenate biosynthesis; (R)-pantoate from 3-methyl-2-oxobutanoate: step 1/2. Its function is as follows. Catalyzes the reversible reaction in which hydroxymethyl group from 5,10-methylenetetrahydrofolate is transferred onto alpha-ketoisovalerate to form ketopantoate. This is 3-methyl-2-oxobutanoate hydroxymethyltransferase from Shouchella clausii (strain KSM-K16) (Alkalihalobacillus clausii).